The following is a 549-amino-acid chain: Cation/acetate symporter ActP (549 aa).

Helical transmembrane passes span 33–53 (WQAI…TYWA), 77–97 (LAIA…ALVF), 103–123 (GLIY…LIAE), 148–168 (ILSA…QMVG), 183–203 (IAVV…GMLA), 206–226 (WVQI…AFMV), 262–282 (ISAL…PHIL), 303–323 (GFMG…IMLV), 355–375 (LFLG…VAGL), 404–424 (VSKI…FLFE), 428–448 (IAFM…PIIL), 464–484 (GGWL…TIWV), and 493–513 (IFPY…GIWF).

Belongs to the sodium:solute symporter (SSF) (TC 2.A.21) family.

Its subcellular location is the cell inner membrane. Functionally, transports acetate. This is Cation/acetate symporter ActP from Salmonella paratyphi C (strain RKS4594).